A 386-amino-acid chain; its full sequence is Outer membrane protein assembly factor BamB (386 aa).

Positions 1 to 20 (MKKLFNQVLVAAGVLALLAG) are cleaved as a signal peptide. Cys21 carries N-palmitoyl cysteine lipidation. A lipid anchor (S-diacylglycerol cysteine) is attached at Cys21.

The protein belongs to the BamB family. In terms of assembly, part of the Bam complex.

The protein resides in the cell outer membrane. Its function is as follows. Part of the outer membrane protein assembly complex, which is involved in assembly and insertion of beta-barrel proteins into the outer membrane. This chain is Outer membrane protein assembly factor BamB, found in Vibrio cholerae serotype O1 (strain ATCC 39315 / El Tor Inaba N16961).